A 285-amino-acid chain; its full sequence is Tyrosine recombinase XerA (285 aa).

In terms of domain architecture, Core-binding (CB) spans 7–84 (IVNSDILEEF…ALKSYFKFEG (78 aa)). A Tyr recombinase domain is found at 100–274 (SLPKSLTEDE…TTKHLREAIE (175 aa)). Residues R135, K160, H226, R229, and H252 contribute to the active site. The active-site O-(3'-phospho-DNA)-tyrosine intermediate is Y261.

The protein belongs to the 'phage' integrase family. XerA subfamily.

It is found in the cytoplasm. In terms of biological role, site-specific tyrosine recombinase, which acts by catalyzing the cutting and rejoining of the recombining DNA molecules. The sequence is that of Tyrosine recombinase XerA from Pyrococcus horikoshii (strain ATCC 700860 / DSM 12428 / JCM 9974 / NBRC 100139 / OT-3).